Here is a 664-residue protein sequence, read N- to C-terminus: MSTKAVVFAYHDIGCVGLQALLDAGYEIAAVFTHADDPREKTFFGSVAQLCARHGIAVHAPEDPNHPLWVERIGKLAPDFIFSFYYRQLLGDSLLACAKKAALNLHGSLLPRYRGRAPANWVLVNGESETGVTLHQMVKRADAGPIVAQQRVSISATDTALTLHGKLRDAAADLLCETLPLLAAQGQLPATPQDESRATYFGRRTPADGLIDWSLPATQLYNLIRAVTQPYPGAFCPVGDNKLIVWAASVDTSSNGEAPGTVISHEPLRIACGEGSLVITAGQRGDNGLYLSGEQLAREFGLVAGSQMLDKAKRRSVRRTRVLILGVNGFIGNHLSERLLQDDRYEIYGMDIGSDAIERLRAKPNFHFIEGDISIHTEWIEYHIKKCDVVLPLVAIATPIEYTRNPLRVFELDFEENLKIVRYCVKYNKRVIFPSTSEVYGMCQDANFNEDTSNLIVGPINKQRWIYSVSKQLLDRVIWAYGQKGLQFTLFRPFNWMGPRLDRLDSARIGSSRAITQLILHLVEGTPIRLVDGGAQKRCFTDVVDGIEALARIIENRDGRCNGQIINIGNPDNEASIRQLGEELLRQFEAHPLRGHFPPFAGFREVESQSFYGKGYQDVSHRTPSIDNAKKLIGWTPGIELSETIGKTLDFFLREAMAEKADQC.

A formyltransferase ArnAFT region spans residues 1–308; the sequence is MSTKAVVFAY…EFGLVAGSQM (308 aa). Residue histidine 106 is the Proton donor; for formyltransferase activity of the active site. Residues arginine 116 and 138 to 142 contribute to the (6R)-10-formyltetrahydrofolate site; that span reads VKRAD. The dehydrogenase ArnADH stretch occupies residues 318 to 664; the sequence is RRTRVLILGV…EAMAEKADQC (347 aa). NAD(+) is bound by residues aspartate 351 and 372–373; that span reads DI. UDP-alpha-D-glucuronate contacts are provided by residues alanine 397, tyrosine 402, and 436–437; that span reads TS. The active-site Proton acceptor; for decarboxylase activity is the glutamate 438. UDP-alpha-D-glucuronate is bound by residues arginine 464, asparagine 495, 529–538, and tyrosine 616; that span reads RLVDGGAQKR. Arginine 622 acts as the Proton donor; for decarboxylase activity in catalysis.

The protein in the N-terminal section; belongs to the Fmt family. UDP-L-Ara4N formyltransferase subfamily. It in the C-terminal section; belongs to the NAD(P)-dependent epimerase/dehydratase family. UDP-glucuronic acid decarboxylase subfamily. As to quaternary structure, homohexamer, formed by a dimer of trimers.

It carries out the reaction UDP-alpha-D-glucuronate + NAD(+) = UDP-beta-L-threo-pentopyranos-4-ulose + CO2 + NADH. The catalysed reaction is UDP-4-amino-4-deoxy-beta-L-arabinose + (6R)-10-formyltetrahydrofolate = UDP-4-deoxy-4-formamido-beta-L-arabinose + (6S)-5,6,7,8-tetrahydrofolate + H(+). The protein operates within nucleotide-sugar biosynthesis; UDP-4-deoxy-4-formamido-beta-L-arabinose biosynthesis; UDP-4-deoxy-4-formamido-beta-L-arabinose from UDP-alpha-D-glucuronate: step 1/3. It functions in the pathway nucleotide-sugar biosynthesis; UDP-4-deoxy-4-formamido-beta-L-arabinose biosynthesis; UDP-4-deoxy-4-formamido-beta-L-arabinose from UDP-alpha-D-glucuronate: step 3/3. It participates in bacterial outer membrane biogenesis; lipopolysaccharide biosynthesis. In terms of biological role, bifunctional enzyme that catalyzes the oxidative decarboxylation of UDP-glucuronic acid (UDP-GlcUA) to UDP-4-keto-arabinose (UDP-Ara4O) and the addition of a formyl group to UDP-4-amino-4-deoxy-L-arabinose (UDP-L-Ara4N) to form UDP-L-4-formamido-arabinose (UDP-L-Ara4FN). The modified arabinose is attached to lipid A and is required for resistance to polymyxin and cationic antimicrobial peptides. The protein is Bifunctional polymyxin resistance protein ArnA of Pseudomonas syringae pv. syringae (strain B728a).